Consider the following 351-residue polypeptide: MKLKSLLIACLLSSLSFSALADRIITDQLDRKVTIPDHINRAVVLQHQTLNIAVQLDATKQIVGVLSNWKKQLGKNYVRLAPELENMAMPGDLNSVNIESLLALKPDVVFVTNYAPSEMIKQISDVNIPVVAISLRTGEVGEKGKLNPTLTDEDKAYNDGLKQGIELIAEVFEKKQQGDELVKAAFANRKLLADRLGDVSADKRVRTYMANPDLGTYGSGKYTGLMMEHAGAYNVAAATIKGFKQVSLENVLEWNPAVILVQDRYPDVVPQILNDQGWANIQALKDKKVFLMPEYAKAWGYPMPEALALGEVWLAKALYPQRFQDVDLDKMVNDYYQKFYRTSYKPDNAAR.

An N-terminal signal peptide occupies residues 1–21 (MKLKSLLIACLLSSLSFSALA). The region spanning 41 to 322 (RAVVLQHQTL…WLAKALYPQR (282 aa)) is the Fe/B12 periplasmic-binding domain. Molybdate is bound by residues 47–48 (HQ), Y217, R264, and 300–301 (GY).

This sequence belongs to the bacterial solute-binding protein 8 family. The complex is composed of two ATP-binding proteins (MolC), two transmembrane proteins (MolB) and a solute-binding protein (MolA).

It is found in the periplasm. Its activity is regulated as follows. The MolBCA complex shows a decrease in affinity in the presence of increasing concentrations of substrate and nucleotide. In terms of biological role, part of the ABC transporter complex MolBCA involved in molybdate import. Functions as a low-affinity molybdate transporter. Binds to both molybdate and tungstate, but not to sulfate or phosphate. The protein is Molybdate-binding protein MolA of Haemophilus influenzae (strain ATCC 51907 / DSM 11121 / KW20 / Rd).